Here is a 261-residue protein sequence, read N- to C-terminus: Thioesterase TesA (261 aa).

Active-site residues include serine 104, aspartate 208, and histidine 236.

This sequence belongs to the thioesterase family.

The catalysed reaction is a fatty acyl-CoA + H2O = a fatty acid + CoA + H(+). In terms of biological role, involved in the synthesis of both phthiocerol dimycocerosates (PDIMs) and phenolic glycolipids (PGLs), which are structurally related lipids non-covalently bound to the outer cell wall layer of M.tuberculosis and are important virulence factors. In Mycobacterium leprae (strain TN), this protein is Thioesterase TesA (tesA).